Consider the following 104-residue polypeptide: UPF0235 protein Sfri_2863 (104 aa).

This sequence belongs to the UPF0235 family.

This chain is UPF0235 protein Sfri_2863, found in Shewanella frigidimarina (strain NCIMB 400).